Consider the following 233-residue polypeptide: Nickel import system ATP-binding protein NikE (233 aa).

The ABC transporter domain maps to 2–228; it reads IELKHVTFGY…DRHSYTKELV (227 aa). 35 to 42 provides a ligand contact to ATP; that stretch reads GESGCGKS.

It belongs to the ABC transporter superfamily. The complex is composed of two ATP-binding proteins (NikD and NikE), two transmembrane proteins (NikB and NikC) and a solute-binding protein (NikA).

Its subcellular location is the cell membrane. It catalyses the reaction Ni(2+)(out) + ATP + H2O = Ni(2+)(in) + ADP + phosphate + H(+). Functionally, part of the ABC transporter complex NikABCDE (Opp2) involved in nickel import. Probably responsible for energy coupling to the transport system. The protein is Nickel import system ATP-binding protein NikE of Staphylococcus aureus (strain bovine RF122 / ET3-1).